A 398-amino-acid chain; its full sequence is Phosphoglycerate kinase (398 aa).

Residues 23 to 25 (DFN), R38, 61 to 64 (HLGK), R122, and R155 each bind substrate. Residues K206, G297, E328, and 354–357 (GGDS) each bind ATP.

This sequence belongs to the phosphoglycerate kinase family. As to quaternary structure, monomer.

It localises to the cytoplasm. It carries out the reaction (2R)-3-phosphoglycerate + ATP = (2R)-3-phospho-glyceroyl phosphate + ADP. The protein operates within carbohydrate degradation; glycolysis; pyruvate from D-glyceraldehyde 3-phosphate: step 2/5. This chain is Phosphoglycerate kinase, found in Clostridium novyi (strain NT).